Consider the following 378-residue polypeptide: UPF0754 membrane protein BCAH187_A1042 (378 aa).

2 helical membrane-spanning segments follow: residues 1-21 and 357-377; these read MNIW…GGFT and YLGA…LLFL.

This sequence belongs to the UPF0754 family.

The protein localises to the cell membrane. In Bacillus cereus (strain AH187), this protein is UPF0754 membrane protein BCAH187_A1042.